We begin with the raw amino-acid sequence, 102 residues long: Large ribosomal subunit protein mL63 (102 aa).

This sequence belongs to the mitochondrion-specific ribosomal protein mL63 family. As to quaternary structure, component of the mitochondrial large ribosomal subunit (mt-LSU). Mature mammalian 55S mitochondrial ribosomes consist of a small (28S) and a large (39S) subunit. The 28S small subunit contains a 12S ribosomal RNA (12S mt-rRNA) and 30 different proteins. The 39S large subunit contains a 16S rRNA (16S mt-rRNA), a copy of mitochondrial valine transfer RNA (mt-tRNA(Val)), which plays an integral structural role, and 52 different proteins.

The protein localises to the mitochondrion. This Homo sapiens (Human) protein is Large ribosomal subunit protein mL63 (MRPL57).